A 387-amino-acid polypeptide reads, in one-letter code: Alpha-maltose-1-phosphate synthase (387 aa).

Belongs to the glycosyltransferase group 1 family.

The catalysed reaction is ADP-alpha-D-glucose + alpha-D-glucose 1-phosphate = alpha-maltose 1-phosphate + ADP + H(+). It functions in the pathway glycan biosynthesis; glycogen biosynthesis. Functionally, involved in the biosynthesis of the maltose-1-phosphate (M1P) building block required for alpha-glucan production by the key enzyme GlgE. Catalyzes the formation of an alpha-1,4 linkage between glucose from ADP-glucose and glucose 1-phosphate (G1P) to yield maltose-1-phosphate (M1P). The sequence is that of Alpha-maltose-1-phosphate synthase from Mycolicibacterium smegmatis (strain ATCC 700084 / mc(2)155) (Mycobacterium smegmatis).